We begin with the raw amino-acid sequence, 140 residues long: Nucleoside diphosphate kinase (140 aa).

ATP-binding residues include Lys-11, Phe-59, Arg-87, Thr-93, Arg-104, and Asn-114. Residue His-117 is the Pros-phosphohistidine intermediate of the active site.

This sequence belongs to the NDK family. In terms of assembly, homotetramer. Requires Mg(2+) as cofactor.

It localises to the cytoplasm. It catalyses the reaction a 2'-deoxyribonucleoside 5'-diphosphate + ATP = a 2'-deoxyribonucleoside 5'-triphosphate + ADP. The catalysed reaction is a ribonucleoside 5'-diphosphate + ATP = a ribonucleoside 5'-triphosphate + ADP. Its function is as follows. Major role in the synthesis of nucleoside triphosphates other than ATP. The ATP gamma phosphate is transferred to the NDP beta phosphate via a ping-pong mechanism, using a phosphorylated active-site intermediate. The chain is Nucleoside diphosphate kinase from Beijerinckia indica subsp. indica (strain ATCC 9039 / DSM 1715 / NCIMB 8712).